The following is a 102-amino-acid chain: Small ribosomal subunit protein uS10 (102 aa).

The protein belongs to the universal ribosomal protein uS10 family. As to quaternary structure, part of the 30S ribosomal subunit.

In terms of biological role, involved in the binding of tRNA to the ribosomes. The protein is Small ribosomal subunit protein uS10 of Methanococcus maripaludis (strain C7 / ATCC BAA-1331).